The following is a 902-amino-acid chain: Protein translocase subunit SecA (902 aa).

Residues glutamine 85, 103–107, and aspartate 492 contribute to the ATP site; that span reads GEGKT. The interval 846 to 902 is disordered; sequence LSYSGGGEEPNQRPKSPRRRSERKIGPNEPCPCGSGKKFKKCHGRVGAPPLPTSQSQ. Cysteine 876, cysteine 878, cysteine 887, and histidine 888 together coordinate Zn(2+).

It belongs to the SecA family. As to quaternary structure, monomer and homodimer. Part of the essential Sec protein translocation apparatus which comprises SecA, SecYEG and auxiliary proteins SecDF. Other proteins may also be involved. The cofactor is Zn(2+).

It localises to the cell membrane. The protein resides in the cytoplasm. The enzyme catalyses ATP + H2O + cellular proteinSide 1 = ADP + phosphate + cellular proteinSide 2.. In terms of biological role, part of the Sec protein translocase complex. Interacts with the SecYEG preprotein conducting channel. Has a central role in coupling the hydrolysis of ATP to the transfer of proteins into and across the cell membrane, serving as an ATP-driven molecular motor driving the stepwise translocation of polypeptide chains across the membrane. The chain is Protein translocase subunit SecA from Rubrobacter xylanophilus (strain DSM 9941 / JCM 11954 / NBRC 16129 / PRD-1).